A 389-amino-acid polypeptide reads, in one-letter code: S-adenosylmethionine synthase (389 aa).

Position 15 (H15) interacts with ATP. D17 provides a ligand contact to Mg(2+). E43 is a binding site for K(+). L-methionine contacts are provided by E56 and Q99. A flexible loop region spans residues 99-109 (QSPDIAQGVNE). ATP-binding positions include 166 to 168 (DAK), 234 to 235 (RF), D243, 249 to 250 (RK), A266, and K270. L-methionine is bound at residue D243. Residue K274 coordinates L-methionine.

It belongs to the AdoMet synthase family. Homotetramer; dimer of dimers. Requires Mg(2+) as cofactor. K(+) serves as cofactor.

The protein resides in the cytoplasm. It carries out the reaction L-methionine + ATP + H2O = S-adenosyl-L-methionine + phosphate + diphosphate. It participates in amino-acid biosynthesis; S-adenosyl-L-methionine biosynthesis; S-adenosyl-L-methionine from L-methionine: step 1/1. In terms of biological role, catalyzes the formation of S-adenosylmethionine (AdoMet) from methionine and ATP. The overall synthetic reaction is composed of two sequential steps, AdoMet formation and the subsequent tripolyphosphate hydrolysis which occurs prior to release of AdoMet from the enzyme. The polypeptide is S-adenosylmethionine synthase (Laribacter hongkongensis (strain HLHK9)).